A 292-amino-acid polypeptide reads, in one-letter code: Ribosomal RNA small subunit methyltransferase A (292 aa).

Residues Asn28, Leu30, Gly55, Glu76, Asp101, and Asn126 each coordinate S-adenosyl-L-methionine.

The protein belongs to the class I-like SAM-binding methyltransferase superfamily. rRNA adenine N(6)-methyltransferase family. RsmA subfamily.

The protein localises to the cytoplasm. The catalysed reaction is adenosine(1518)/adenosine(1519) in 16S rRNA + 4 S-adenosyl-L-methionine = N(6)-dimethyladenosine(1518)/N(6)-dimethyladenosine(1519) in 16S rRNA + 4 S-adenosyl-L-homocysteine + 4 H(+). Functionally, specifically dimethylates two adjacent adenosines (A1518 and A1519) in the loop of a conserved hairpin near the 3'-end of 16S rRNA in the 30S particle. May play a critical role in biogenesis of 30S subunits. The chain is Ribosomal RNA small subunit methyltransferase A from Bacillus thuringiensis (strain Al Hakam).